The sequence spans 298 residues: MNEFERVRAYLTDLQDRICAAIEAVDGRARFQEDLWQRAEGGGGRTRVLRDGAVFEQAGIGFSDVSGSRLPPSASANRPELAGASWRATGVSLVFHPLNPYVPTTHANVRFFQAQRDGEVVASWFGGGFDLTPFYPFDEDVQHWHQVARDLCAPFGDERYAAHKRWCDEYFFLRHRNETRGVGGLFFDDLHGDFERDFAYLRAVGDGFLDAYLPIVQQRKDAIYGEREREFQLYRRGRYVEFNLVYDRGTLFGLQSGGRSESILMSLPPRVRWEYGFTPEAGSAEARLADYLVPRDWL.

Position 92 (S92) interacts with substrate. A divalent metal cation-binding residues include H96 and H106. The active-site Proton donor is the H106. Substrate is bound at residue 108–110; the sequence is NVR. A divalent metal cation-binding residues include H145 and H175. Residues 239 to 274 are important for dimerization; sequence YVEFNLVYDRGTLFGLQSGGRSESILMSLPPRVRWE. Residue 257-259 coordinates substrate; sequence GGR.

Belongs to the aerobic coproporphyrinogen-III oxidase family. Homodimer. A divalent metal cation is required as a cofactor.

It localises to the cytoplasm. The catalysed reaction is coproporphyrinogen III + O2 + 2 H(+) = protoporphyrinogen IX + 2 CO2 + 2 H2O. It functions in the pathway porphyrin-containing compound metabolism; protoporphyrin-IX biosynthesis; protoporphyrinogen-IX from coproporphyrinogen-III (O2 route): step 1/1. In terms of biological role, involved in the heme biosynthesis. Catalyzes the aerobic oxidative decarboxylation of propionate groups of rings A and B of coproporphyrinogen-III to yield the vinyl groups in protoporphyrinogen-IX. The protein is Oxygen-dependent coproporphyrinogen-III oxidase of Stenotrophomonas maltophilia (strain K279a).